A 96-amino-acid polypeptide reads, in one-letter code: Growth-regulated alpha protein (96 aa).

Residues 1 to 24 form the signal peptide; that stretch reads MVSATRSLLCAALPVLATSRQATG. 2 disulfides stabilise this stretch: Cys33-Cys59 and Cys35-Cys75.

The protein belongs to the intercrine alpha (chemokine CxC) family. As to quaternary structure, monomer and homodimer. In terms of tissue distribution, at least expressed in the lung and trachea.

The protein localises to the secreted. Its function is as follows. Has chemotactic activity for neutrophils. Contributes to neutrophil activation during inflammation. This chain is Growth-regulated alpha protein (Cxcl1), found in Rattus norvegicus (Rat).